Reading from the N-terminus, the 425-residue chain is Probable threonylcarbamoyladenosine tRNA methylthiotransferase (425 aa).

The MTTase N-terminal domain occupies 2-110; sequence VKVYIENYGC…IVQAVEYAMR (109 aa). 6 residues coordinate [4Fe-4S] cluster: Cys11, Cys47, Cys76, Cys148, Cys152, and Cys155. The region spanning 134-363 is the Radical SAM core domain; the sequence is SPRNVYFILP…HRIRLQISYE (230 aa). One can recognise a TRAM domain in the interval 366 to 425; the sequence is RKYIGKKVKVLIHGEGKKGNVDAVTMNYKHIILPEGRKGEFREARVKNAASTYLLGEIIT.

It belongs to the methylthiotransferase family. CDKAL1 subfamily. It depends on [4Fe-4S] cluster as a cofactor.

It carries out the reaction N(6)-L-threonylcarbamoyladenosine(37) in tRNA + (sulfur carrier)-SH + AH2 + 2 S-adenosyl-L-methionine = 2-methylsulfanyl-N(6)-L-threonylcarbamoyladenosine(37) in tRNA + (sulfur carrier)-H + 5'-deoxyadenosine + L-methionine + A + S-adenosyl-L-homocysteine + 2 H(+). Its function is as follows. Catalyzes the methylthiolation of N6-threonylcarbamoyladenosine (t(6)A), leading to the formation of 2-methylthio-N6-threonylcarbamoyladenosine (ms(2)t(6)A) at position 37 in tRNAs that read codons beginning with adenine. The sequence is that of Probable threonylcarbamoyladenosine tRNA methylthiotransferase from Pyrococcus horikoshii (strain ATCC 700860 / DSM 12428 / JCM 9974 / NBRC 100139 / OT-3).